The primary structure comprises 725 residues: ABC transporter G family member 19 (725 aa).

The region spanning 73–325 is the ABC transporter domain; it reads LNFNNLQYDV…FSDFGRPIPE (253 aa). 117–124 is an ATP binding site; sequence GASGAGKS. An ABC transmembrane type-2 domain is found at 419-629; the sequence is FETFILAKRY…PYEAVLINEF (211 aa). Helical transmembrane passes span 438–458, 473–493, 515–535, 537–557, 577–597, 606–626, and 698–718; these read LVGT…TVYW, LFAF…PVFI, ISHS…FSAI, FWTV…LLIY, IMLC…LSGF, FYWT…AVLI, and LWIT…ALLF.

It belongs to the ABC transporter superfamily. ABCG family. Eye pigment precursor importer (TC 3.A.1.204) subfamily.

It is found in the vacuole membrane. Functionally, confers selective resistance to kanamycin. The sequence is that of ABC transporter G family member 19 (ABCG19) from Arabidopsis thaliana (Mouse-ear cress).